The chain runs to 437 residues: Immunoglobulin superfamily member 11 (437 aa).

Positions 1–22 (MTCRGSPLAPLLLFSLHGVAAS) are cleaved as a signal peptide. The region spanning 23-136 (LEVSESPGSV…DRGGRNIGVT (114 aa)) is the Ig-like V-type domain. The Extracellular segment spans residues 23-241 (LEVSESPGSV…VISPQPRSIG (219 aa)). 2 cysteine pairs are disulfide-bonded: Cys-44–Cys-120 and Cys-165–Cys-215. Asn-102 carries N-linked (GlcNAc...) asparagine glycosylation. In terms of domain architecture, Ig-like C2-type spans 144–234 (PSAPHCQIQG…TCLLDLQVIS (91 aa)). Residues 242–262 (LIAGAIGTGAVIIIFCIALIL) form a helical membrane-spanning segment. The Cytoplasmic segment spans residues 263–437 (GAFFYWRSKN…PAQSRAGSLV (175 aa)). Omega-N-methylarginine is present on Arg-379. A disordered region spans residues 382–405 (SLPAVSRSNGSVSRKARPPPVPSL).

Post-translationally, N-glycosylated.

It is found in the cell membrane. Functions as a cell adhesion molecule through homophilic interaction. Stimulates cell growth. The protein is Immunoglobulin superfamily member 11 (IGSF11) of Bos taurus (Bovine).